We begin with the raw amino-acid sequence, 402 residues long: MAHTLDSQQPAVPVRNFQINFGPQHPAAHGVLRMVLELNGEVVERVDPHIGLLHRGTEKLIEAKTYLQAVPYFDRLDYCAPMNQEHAFCLAVERLAGIEVPKRGQLIRVLYSEIGRLLSHLLNVTTFAMDVGALTPPLWGFEAREKLMMFYERASGSRMHAAYFRPGGVHQDLPQKLVEDIGEFCRTFPSLLDDLDALVTGNRIFKQRTVDIGVVTLEDALAWGFSGVMVRGSGAPWDLRRAQPYECYSELDFDIPIGKHGDCYDRYVVRMEEMRQSNKIMLQCVDRLLKEAGPVASTDRKVSPPKRGEMKRSMEALIHHFKLYTEGFHVPEGEVYAAVEAPKGEFGVYLVGDGTNKPYRCKIRAPGFAHLQSMDFLCRGHMLADVSAVLGSLDIVFGEVDR.

It belongs to the complex I 49 kDa subunit family. In terms of assembly, NDH-1 is composed of 14 different subunits. Subunits NuoB, C, D, E, F, and G constitute the peripheral sector of the complex.

It is found in the cell inner membrane. It catalyses the reaction a quinone + NADH + 5 H(+)(in) = a quinol + NAD(+) + 4 H(+)(out). Its function is as follows. NDH-1 shuttles electrons from NADH, via FMN and iron-sulfur (Fe-S) centers, to quinones in the respiratory chain. The immediate electron acceptor for the enzyme in this species is believed to be ubiquinone. Couples the redox reaction to proton translocation (for every two electrons transferred, four hydrogen ions are translocated across the cytoplasmic membrane), and thus conserves the redox energy in a proton gradient. The chain is NADH-quinone oxidoreductase subunit D from Azorhizobium caulinodans (strain ATCC 43989 / DSM 5975 / JCM 20966 / LMG 6465 / NBRC 14845 / NCIMB 13405 / ORS 571).